A 249-amino-acid polypeptide reads, in one-letter code: Acetylglutamate kinase (249 aa).

Substrate contacts are provided by residues 36–37, R58, and N147; that span reads GG.

Belongs to the acetylglutamate kinase family. ArgB subfamily.

It is found in the cytoplasm. The catalysed reaction is N-acetyl-L-glutamate + ATP = N-acetyl-L-glutamyl 5-phosphate + ADP. It functions in the pathway amino-acid biosynthesis; L-arginine biosynthesis; N(2)-acetyl-L-ornithine from L-glutamate: step 2/4. In terms of biological role, catalyzes the ATP-dependent phosphorylation of N-acetyl-L-glutamate. The protein is Acetylglutamate kinase of Thermus thermophilus (strain ATCC 27634 / DSM 579 / HB8).